A 2621-amino-acid chain; its full sequence is Nonribosomal peptide synthetase dtpA (2621 aa).

The tract at residues 446–844 (CMEQPNAEAI…GRKDQQVKIR (399 aa)) is adenylation 1. One can recognise a Carrier 1 domain in the interval 978–1054 (QPYTQVEETL…EVALYSRALS (77 aa)). S1015 carries the post-translational modification O-(pantetheine 4'-phosphoryl)serine. The tract at residues 1095-1506 (EDIYPCTALQ…LNQLELAGPQ (412 aa)) is condensation 1. The adenylation 2 stretch occupies residues 1534–1930 (SRTQPGASAI…GRRDNQVKLR (397 aa)). The Carrier 2 domain maps to 2071–2147 (QPSTTQEALV…LFCTNASTSI (77 aa)). The residue at position 2108 (S2108) is an O-(pantetheine 4'-phosphoryl)serine. The tract at residues 2220-2618 (AIFKLHGSKV…HSARPIASID (399 aa)) is condensation 2.

The protein belongs to the NRP synthetase family.

The protein operates within alkaloid biosynthesis. Its function is as follows. Nonribosomal peptide synthetase; part of the gene cluster that mediates the biosynthesis of the dimeric diketopiperazine alkaloid ditryptophenaline. The nonribosomal peptide synthase dtpA accepts L-tryptophan and L-phenylalanine as its substrates and forms the phenylalanyl-tryptophanyl cyclic dipeptide product cyclophenylalanyltryptophenyl. The N-methyltransferase dtpB is responsible for the N-methylation of cyclophenylalanyltryptophenyl to yield cyclo-N-methylphenylalanyltryptophenyl. The cytochrome P450 monooxygenase is responsible not only for pyrroloindole ring formation but also for concurrent dimerization of N-methylphenylalanyltryptophanyl diketopiperazine monomers into a homodimeric product. This is Nonribosomal peptide synthetase dtpA from Aspergillus flavus (strain ATCC 200026 / FGSC A1120 / IAM 13836 / NRRL 3357 / JCM 12722 / SRRC 167).